Here is a 213-residue protein sequence, read N- to C-terminus: Pyrrolidone-carboxylate peptidase (213 aa).

Active-site residues include E78, C141, and H165.

Belongs to the peptidase C15 family. Homotetramer.

The protein resides in the cytoplasm. The catalysed reaction is Release of an N-terminal pyroglutamyl group from a polypeptide, the second amino acid generally not being Pro.. In terms of biological role, removes 5-oxoproline from various penultimate amino acid residues except L-proline. The polypeptide is Pyrrolidone-carboxylate peptidase (Staphylococcus carnosus (strain TM300)).